The sequence spans 86 residues: Small ribosomal subunit protein uS17 (86 aa).

This sequence belongs to the universal ribosomal protein uS17 family. As to quaternary structure, part of the 30S ribosomal subunit.

Its function is as follows. One of the primary rRNA binding proteins, it binds specifically to the 5'-end of 16S ribosomal RNA. This is Small ribosomal subunit protein uS17 from Bifidobacterium longum (strain DJO10A).